The chain runs to 229 residues: Putative N-acetylmannosamine-6-phosphate 2-epimerase (229 aa).

It belongs to the NanE family.

It carries out the reaction an N-acyl-D-glucosamine 6-phosphate = an N-acyl-D-mannosamine 6-phosphate. Its pathway is amino-sugar metabolism; N-acetylneuraminate degradation; D-fructose 6-phosphate from N-acetylneuraminate: step 3/5. In terms of biological role, converts N-acetylmannosamine-6-phosphate (ManNAc-6-P) to N-acetylglucosamine-6-phosphate (GlcNAc-6-P). The protein is Putative N-acetylmannosamine-6-phosphate 2-epimerase of Salmonella agona (strain SL483).